A 933-amino-acid polypeptide reads, in one-letter code: Protein translocase subunit SecA (933 aa).

ATP is bound by residues glutamine 90, 108 to 112 (GEGKT), and aspartate 504. The disordered stretch occupies residues 539–570 (GMGSNNRRPQGFGQDSKKKKWQPSADIFPTDL).

It belongs to the SecA family. As to quaternary structure, monomer and homodimer. Part of the essential Sec protein translocation apparatus which comprises SecA, SecYEG and auxiliary proteins SecDF. Other proteins may also be involved.

The protein resides in the cell inner membrane. It is found in the cellular thylakoid membrane. It localises to the cytoplasm. The enzyme catalyses ATP + H2O + cellular proteinSide 1 = ADP + phosphate + cellular proteinSide 2.. In terms of biological role, part of the Sec protein translocase complex. Interacts with the SecYEG preprotein conducting channel. Has a central role in coupling the hydrolysis of ATP to the transfer of proteins into and across the cell membrane, serving as an ATP-driven molecular motor driving the stepwise translocation of polypeptide chains across the membrane. Functionally, probably participates in protein translocation into and across both the cytoplasmic and thylakoid membranes in cyanobacterial cells. The protein is Protein translocase subunit SecA of Crocosphaera subtropica (strain ATCC 51142 / BH68) (Cyanothece sp. (strain ATCC 51142)).